An 818-amino-acid polypeptide reads, in one-letter code: FAD-dependent monooxygenase anuJ (818 aa).

Glu46, Ala60, Arg122, Asp329, and Gly342 together coordinate FAD. 3 consecutive transmembrane segments (helical) span residues 471 to 491 (VLWALPLLGMAVAGLLTMFSV), 539 to 559 (FFYQPFSFFADYGVWYGIMLV), and 571 to 591 (LSFALLWGMLNMWGIAIFVPI). A glycan (N-linked (GlcNAc...) asparagine) is linked at Asn614. A run of 2 helical transmembrane segments spans residues 621 to 641 (ILPVLLATHYATFMDAYLSPV) and 647 to 667 (AAGFLWELFPVWLSLAQAGLA). Asn683 carries an N-linked (GlcNAc...) asparagine glycan. 2 helical membrane-spanning segments follow: residues 743–763 (WDQVFFAIPNLFWIILLFADL) and 778–798 (FSALGLIIAGGNGTMLGLMWL).

Belongs to the paxM FAD-dependent monooxygenase family.

The protein resides in the membrane. Functionally, highly reducing polyketide synthase; part of the gene cluster that mediates the biosynthesis of annullatin D, an alkylated aromatic polyketide with a fused dihydrobenzofuran lactone ring system that exhibits potent agonistic activities toward the cannabinoid receptors. AnuJ does not seem to play a role within the pathway. The annullatin backbone 2-hydroxymethyl-3-pentylphenol is assembled from one acetyl-CoA starter unit and 5 malonyl-CoA elongation units by cooperation of the highly reducing polyketide synthase anuA, the short-chain dehydrogenase anuB and the oxidoreductase anuC, before being hydroxylated at the C-5 alkyl chain by the cytochrome P450 monooxygenase anuE to form (8S)-annullatin E. The prenyltransferase anuH subsequently installs one isoprenyl group at the benzene ring to form (8S)-annullatin J. Enzymatic or nonenzymatic dihydro-benzofuran ring formation between the prenyl and the phenolic hydroxyl groups in (8S)-annullatin J results in two diastereomers (2S,9S)-annullatin H and compound 12. The intermediate (2S,9S)-annullatin H is then converted to (2S,9S)-annullatin D by the FAD-linked oxidoreductase anuG-catalyzed five-member lactone ring formation. The isomer 12 acts as a substrate for the short-chain dehydrogenase anuF and is oxidized to (2R)-annullatin F, which is subsequently acetylated by an acetyltransferase leading to (2R)-annullatin G formation. The remaining enzymes identified within the cluster, anuD, anuI and anuJ, seem not to be involved in annullatin biosynthesis. In Penicillium roqueforti (strain FM164), this protein is FAD-dependent monooxygenase anuJ.